The sequence spans 552 residues: MFS-type transporter atr4 (552 aa).

The segment at 1 to 102 (MEDPKSLSAP…NIVDWDGPND (102 aa)) is disordered. Residues 16–27 (ADTTTADETPAA) show a composition bias toward low complexity. 2 stretches are compositionally biased toward polar residues: residues 38 to 47 (KAGSESSENT) and 71 to 80 (LRNSSVSRSN). A glycan (N-linked (GlcNAc...) asparagine) is linked at asparagine 73. Transmembrane regions (helical) follow at residues 118–138 (IFLVSSITFISPLGSSILATG), 153–173 (LGSLVVSVYLLGFAAGPLVIA), 182–202 (MPLYHICNILFAILTVGCALG), 214–234 (LQGCAGSAPLAIGGGTISDLI), 244–264 (GIYALGPTLGPIFGPVAGGFL), and 272–292 (WLMWLLLMIEGSVTLVNFVVM). N-linked (GlcNAc...) asparagine glycosylation is present at asparagine 314. Transmembrane regions (helical) follow at residues 346-366 (PIIFLLSLFMAMVYGYLYLLF), 385-405 (GLVYLGLGIGNIIGLVIFGVF), 425-445 (LLPMVWTSFTVPIGLFIYGWS), 452-472 (WIVPIIGTVFFGIGLLVTLVC), 498-518 (VVGATLPLAGPSMYQALGIGW), and 521-541 (SLLAFIALAGCPIPWVFYVYG).

The protein belongs to the major facilitator superfamily.

The protein resides in the cell membrane. In terms of biological role, MFS-type transporter; part of the gene cluster that mediates the biosynthesis of atranorin, a depside of polyketide origin that accumulates in the cortical or medullary layers of lichen thalli. This is MFS-type transporter atr4 from Stereocaulon alpinum (Alpine snow lichen).